The chain runs to 576 residues: Coilin (576 aa).

A Phosphoserine modification is found at Ser-105. Thr-122 carries the phosphothreonine modification. Disordered stretches follow at residues 125–330 (DCKY…CLMS) and 352–389 (RPGP…SLPA). Glycyl lysine isopeptide (Lys-Gly) (interchain with G-Cter in SUMO2) cross-links involve residues Lys-127, Lys-151, and Lys-160. Ser-184 is subject to Phosphoserine; by VRK1 and VRK2. Residues Lys-204 and Lys-209 each participate in a glycyl lysine isopeptide (Lys-Gly) (interchain with G-Cter in SUMO2) cross-link. Over residues 214–225 (QRCSSPKGSARN) the composition is skewed to polar residues. Residues 223–226 (ARNS) form a 1-1 repeat. A 2 X 4 AA repeats of A-R-N-S region spans residues 223-271 (ARNSLVKAKRKGSVSVCSKESPSSSSESESCDESISDGPSKVTLEARNS). The segment covering 235 to 250 (SVSVCSKESPSSSSES) has biased composition (low complexity). Ser-248, Ser-250, Ser-256, Ser-271, and Ser-272 each carry phosphoserine. A 1-2 repeat occupies 268 to 271 (ARNS). The segment covering 270 to 285 (NSSEKLPTELSKEEPS) has biased composition (basic and acidic residues). Residues Lys-274 and Lys-281 each participate in a glycyl lysine isopeptide (Lys-Gly) (interchain with G-Cter in SUMO2) cross-link. Thr-290 is modified (phosphothreonine). Residues Lys-293 and Lys-297 each participate in a glycyl lysine isopeptide (Lys-Gly) (interchain with G-Cter in SUMO2) cross-link. At Ser-301 the chain carries Phosphoserine. Low complexity predominate over residues 301–320 (SLTPSKGKTSGTTSSSSDSS). Phosphothreonine is present on Thr-303. Residues 386 to 389 (SLPA) form a 2-1 repeat. The segment at 386-520 (SLPASLGRGW…DIEILSSLPA (135 aa)) is 2 X 4 AA repeats of S-L-P-A. The tract at residues 392-420 (GRGWGREENLFSWKGAKGRGMRGRGRGRG) is required for interaction with SMN. Phosphoserine is present on Ser-403. 4 repeat units span residues 413–414 (RG), 415–416 (RG), 417–418 (RG), and 419–420 (RG). The tract at residues 413–420 (RGRGRGRG) is 4 X 2 AA tandem repeats of R-G. Residue Lys-444 forms a Glycyl lysine isopeptide (Lys-Gly) (interchain with G-Cter in SUMO2) linkage. A Phosphothreonine modification is found at Thr-456. The 100-residue stretch at 460-559 (DYSLLPLLAA…ITVFWKELID (100 aa)) folds into the Tudor; atypical domain. A phosphoserine mark is found at Ser-487 and Ser-489. Lys-496 participates in a covalent cross-link: Glycyl lysine isopeptide (Lys-Gly) (interchain with G-Cter in SUMO2). Residues 517-520 (SLPA) form a 2-2 repeat. The residue at position 566 (Ser-566) is a Phosphoserine.

Belongs to the coilin family. Interacts with ANKS1B. Interacts with SMN1 (via Tudor domain). Interacts (via C-terminus) with AK6. Interacts with WRAP53/TCAB1. Interacts with HMBOX1. Interacts with PSME3; the interaction is inhibited by PSME3IP1. Interacts wit UBL5. Post-translationally, symmetrical dimethylation of arginine residues within the RG repeat region enhances affinity for SMN, and thus localization of SMN complexes to CBs. In terms of processing, phosphorylated by VRK1. Phosphorylation during mitosis is associated with disassembly of CBs. As to expression, found in all the cell types examined.

Its subcellular location is the nucleus. The protein localises to the cajal body. Functionally, component of nuclear coiled bodies, also known as Cajal bodies or CBs, which are involved in the modification and assembly of nucleoplasmic snRNPs. This is Coilin (COIL) from Homo sapiens (Human).